The chain runs to 479 residues: 3-phytase B (479 aa).

Residues methionine 1–alanine 19 form the signal peptide. Disulfide bonds link cysteine 71–cysteine 387, cysteine 128–cysteine 472, cysteine 216–cysteine 441, cysteine 225–cysteine 298, and cysteine 413–cysteine 421. Histidine 82 (nucleophile) is an active-site residue. Asparagine 191 carries N-linked (GlcNAc...) asparagine glycosylation. Residue asparagine 315 is glycosylated (N-linked (GlcNAc...) asparagine). Aspartate 338 serves as the catalytic Proton donor. A glycan (N-linked (GlcNAc...) asparagine) is linked at asparagine 458.

It belongs to the histidine acid phosphatase family. In terms of assembly, homodimer.

The enzyme catalyses 1D-myo-inositol hexakisphosphate + H2O = 1D-myo-inositol 1,2,4,5,6-pentakisphosphate + phosphate. Catalyzes the hydrolysis of inorganic orthophosphate from phytate. The protein is 3-phytase B (phyB) of Aspergillus awamori (Black koji mold).